Here is a 443-residue protein sequence, read N- to C-terminus: MDPLNLSWYDDDPESRNWSRPFNGSEGKVGKPHYNYYAMLLTLLIFVIVFGNVLVCMAVSREKALQTTTNYLIVSLAVADLLVATLVMPWVVYLEVVGEWKFSRIHCDIFVTLDVMMCTASILNLCAISIDRYTAVAMPMLYNTRYSSKRRVTVMIAIVWVLSFTISCPLLFGLNNTDQNECIIANPAFVVYSSVVSFYVPFIVTLLVYIKIYIVLRRRRKRVNTKRSSRAFRANLKAPLKGNYTHPEDMKLCTVIMKSNGSFPVNRRRVEAARRAQELEMEMLSSTSPPERTRYSPIPPSHHQLTLPDPSHHGLHSTANSPVKPEKNGHAKDHPKIAKIFEIQSMPNGKTRTSLKTMSRRKLSQQKEKKATQMLAIVLGVFIICWLPFFITHILNIHCDCNIPPVLYSAFTWLGYVNSAVNPIIYTTFNVEFRKAFMKILHC.

Residues 1–37 (MDPLNLSWYDDDPESRNWSRPFNGSEGKVGKPHYNYY) lie on the Extracellular side of the membrane. N-linked (GlcNAc...) asparagine glycans are attached at residues N5, N17, and N23. The chain crosses the membrane as a helical span at residues 38 to 60 (AMLLTLLIFVIVFGNVLVCMAVS). Residues 61-70 (REKALQTTTN) lie on the Cytoplasmic side of the membrane. The helical transmembrane segment at 71-93 (YLIVSLAVADLLVATLVMPWVVY) threads the bilayer. Residues 94 to 108 (LEVVGEWKFSRIHCD) are Extracellular-facing. Cysteines 107 and 182 form a disulfide. A helical membrane pass occupies residues 109–130 (IFVTLDVMMCTASILNLCAISI). The Cytoplasmic portion of the chain corresponds to 131–151 (DRYTAVAMPMLYNTRYSSKRR). The helical transmembrane segment at 152 to 172 (VTVMIAIVWVLSFTISCPLLF) threads the bilayer. Residues 173–188 (GLNNTDQNECIIANPA) lie on the Extracellular side of the membrane. A helical membrane pass occupies residues 189-213 (FVVYSSVVSFYVPFIVTLLVYIKIY). Residues 211–373 (KIYIVLRRRR…SQQKEKKATQ (163 aa)) are interaction with PPP1R9B. The Cytoplasmic segment spans residues 214–373 (IVLRRRRKRV…SQQKEKKATQ (160 aa)). Positions 282–331 (EMLSSTSPPERTRYSPIPPSHHQLTLPDPSHHGLHSTANSPVKPEKNGHA) are disordered. A helical membrane pass occupies residues 374-395 (MLAIVLGVFIICWLPFFITHIL). At 396–409 (NIHCDCNIPPVLYS) the chain is on the extracellular side. A disulfide bond links C399 and C401. The chain crosses the membrane as a helical span at residues 410-431 (AFTWLGYVNSAVNPIIYTTFNV). The Cytoplasmic portion of the chain corresponds to 432 to 443 (EFRKAFMKILHC). C443 carries S-palmitoyl cysteine lipidation.

It belongs to the G-protein coupled receptor 1 family. In terms of assembly, forms homo- and heterooligomers with DRD4. The interaction with DRD4 may modulate agonist-induced downstream signaling. Interacts with CADPS and CADPS2. Interacts with GPRASP1, PPP1R9B and CLIC6. Interacts with ARRB2. Interacts with HTR2A. Interacts with DRD1. Interacts with KCNA2. Palmitoylated. Palmitoylation which is required for proper localization to the plasma membrane and stability of the receptor could be carried on by ZDHHC4, ZDHHC3 and ZDHHC8.

The protein resides in the cell membrane. Its subcellular location is the golgi apparatus membrane. In terms of biological role, dopamine receptor whose activity is mediated by G proteins which inhibit adenylyl cyclase. Positively regulates postnatal regression of retinal hyaloid vessels via suppression of VEGFR2/KDR activity, downstream of OPN5. This chain is D(2) dopamine receptor (DRD2), found in Mustela putorius furo (European domestic ferret).